Here is a 226-residue protein sequence, read N- to C-terminus: Late protein I226R (226 aa).

Residues 1 to 16 (MKMETFLVCLFHNADG) form the signal peptide. N-linked (GlcNAc...) asparagine; by host glycosylation is found at Asn142 and Asn164.

Belongs to the asfivirus I226R family.

Its function is as follows. Plays a role in the inhibition of host NF-kappa-B and IRF3 signaling pathways. Mechanistically, promotes the degradation of host IKBKG through enhancing its ubiquitination leading to inhibition of both pathways. The sequence is that of Late protein I226R from African swine fever virus (isolate Warthog/Namibia/Wart80/1980) (ASFV).